Here is a 117-residue protein sequence, read N- to C-terminus: Large ribosomal subunit protein uL18 (117 aa).

The protein belongs to the universal ribosomal protein uL18 family. As to quaternary structure, part of the 50S ribosomal subunit; part of the 5S rRNA/L5/L18/L25 subcomplex. Contacts the 5S and 23S rRNAs.

This is one of the proteins that bind and probably mediate the attachment of the 5S RNA into the large ribosomal subunit, where it forms part of the central protuberance. This Polynucleobacter necessarius subsp. necessarius (strain STIR1) protein is Large ribosomal subunit protein uL18.